We begin with the raw amino-acid sequence, 305 residues long: Ribonucleoside-diphosphate reductase small subunit (305 aa).

Residues glutamate 64, glutamate 94, and histidine 97 each coordinate Fe cation. Tyrosine 101 is an active-site residue. Residues 150 to 170 (ILLFLLVEGIFFISSFFSIGL) form a helical membrane-spanning segment. Fe cation-binding residues include glutamate 157, glutamate 191, and histidine 194.

This sequence belongs to the ribonucleoside diphosphate reductase small chain family. In terms of assembly, heterotetramer composed of a homodimer of the large subunit (R1) and a homodimer of the small subunit (R2). Larger multisubunit protein complex are also active, composed of (R1)n(R2)n. Requires Fe cation as cofactor.

It localises to the host membrane. The catalysed reaction is a 2'-deoxyribonucleoside 5'-diphosphate + [thioredoxin]-disulfide + H2O = a ribonucleoside 5'-diphosphate + [thioredoxin]-dithiol. In terms of biological role, ribonucleoside-diphosphate reductase holoenzyme provides the precursors necessary for viral DNA synthesis. Allows virus growth in non-dividing cells, as well as reactivation from latency in infected hosts. Catalyzes the biosynthesis of deoxyribonucleotides from the corresponding ribonucleotides. The sequence is that of Ribonucleoside-diphosphate reductase small subunit from Saimiri sciureus (Common squirrel monkey).